Here is a 290-residue protein sequence, read N- to C-terminus: Manganese efflux system protein MneS (290 aa).

6 helical membrane passes run 15–35 (LVSI…GYLF), 39–61 (ALTA…LIGL), 82–102 (IASL…LFSA), 113–133 (TPDM…LIVY), 159–179 (AFVS…LAWI), and 181–201 (TVTA…IFKE).

This sequence belongs to the cation diffusion facilitator (CDF) transporter (TC 2.A.4) family.

The protein resides in the cell membrane. Functionally, secondary manganese efflux system. May prevent manganese intoxication. This chain is Manganese efflux system protein MneS, found in Bacillus subtilis (strain 168).